Consider the following 530-residue polypeptide: UDP-glucuronosyltransferase 2B17 (530 aa).

A signal peptide spans methionine 1–cysteine 23. A helical transmembrane segment spans residues valine 494–valine 510.

It belongs to the UDP-glycosyltransferase family.

It is found in the endoplasmic reticulum membrane. It carries out the reaction glucuronate acceptor + UDP-alpha-D-glucuronate = acceptor beta-D-glucuronoside + UDP + H(+). The catalysed reaction is 17alpha-estradiol + UDP-alpha-D-glucuronate = 17alpha-estradiol 3-O-(beta-D-glucuronate) + UDP + H(+). It catalyses the reaction 17alpha-estradiol + UDP-alpha-D-glucuronate = 17alpha-estradiol 17-O-(beta-D-glucuronate) + UDP + H(+). The enzyme catalyses 17beta-estradiol + UDP-alpha-D-glucuronate = 17beta-estradiol 17-O-(beta-D-glucuronate) + UDP + H(+). It carries out the reaction 17beta-hydroxy-5alpha-androstan-3-one + UDP-alpha-D-glucuronate = 5alpha-dihydrotestosterone 17-O-(beta-D-glucuronate) + UDP + H(+). The catalysed reaction is testosterone + UDP-alpha-D-glucuronate = testosterone 17-O-(beta-D-glucuronate) + UDP + H(+). Its function is as follows. UDP-glucuronosyltransferase (UGT) that catalyzes phase II biotransformation reactions in which lipophilic substrates are conjugated with glucuronic acid to increase the metabolite's water solubility, thereby facilitating excretion into either the urine or bile. Catalyzes the glucuronidation of endogenous steroid hormones such as androgens (epitestosterone, androsterone) and estrogens (estradiol, epiestradiol). The chain is UDP-glucuronosyltransferase 2B17 from Rattus norvegicus (Rat).